Consider the following 440-residue polypeptide: Ran-specific GTPase-activating protein 30 (440 aa).

The 314-residue stretch at 1–314 folds into the RanBD1 domain; that stretch reads MDEILAKAGS…LVLKIDRSDD (314 aa). The residue at position 272 (Thr-272) is a Phosphothreonine. The span at 341-371 shows a compositional bias: acidic residues; sequence IEEDEEEDEEEDEEEGKDGEERKEEEEEENK. The segment at 341-375 is disordered; sequence IEEDEEEDEEEDEEEGKDGEERKEEEEEENKLEDK.

As to quaternary structure, interacts with GSP1.

It localises to the cytoplasm. The protein localises to the nucleus. In terms of biological role, important for the export of protein containing nuclear export signal (NES) out of the nucleus. Stimulates the GTPase activity of GSP1. This Saccharomyces cerevisiae (strain ATCC 204508 / S288c) (Baker's yeast) protein is Ran-specific GTPase-activating protein 30 (YRB30).